Reading from the N-terminus, the 939-residue chain is Valine--tRNA ligase (939 aa).

The short motif at 47-57 (PNVTGILHMGH) is the 'HIGH' region element. A 'KMSKS' region motif is present at residues 563-567 (KLSKS). Residue Lys-566 coordinates ATP. Positions 873–939 (AEHLAKEHAR…QSILDKIASL (67 aa)) form a coiled coil.

The protein belongs to the class-I aminoacyl-tRNA synthetase family. ValS type 1 subfamily. Monomer.

The protein resides in the cytoplasm. The enzyme catalyses tRNA(Val) + L-valine + ATP = L-valyl-tRNA(Val) + AMP + diphosphate. Its function is as follows. Catalyzes the attachment of valine to tRNA(Val). As ValRS can inadvertently accommodate and process structurally similar amino acids such as threonine, to avoid such errors, it has a 'posttransfer' editing activity that hydrolyzes mischarged Thr-tRNA(Val) in a tRNA-dependent manner. This chain is Valine--tRNA ligase, found in Chlamydia muridarum (strain MoPn / Nigg).